Reading from the N-terminus, the 394-residue chain is Dual-specificity RNA methyltransferase RlmN (394 aa).

Glutamate 115 acts as the Proton acceptor in catalysis. The 243-residue stretch at 121-363 (DEGRGTLCVS…SPIRTPRGED (243 aa)) folds into the Radical SAM core domain. A disulfide bridge connects residues cysteine 128 and cysteine 368. The [4Fe-4S] cluster site is built by cysteine 135, cysteine 139, and cysteine 142. S-adenosyl-L-methionine-binding positions include 194-195 (GE), serine 226, 248-250 (SFH), and asparagine 325. Cysteine 368 serves as the catalytic S-methylcysteine intermediate.

This sequence belongs to the radical SAM superfamily. RlmN family. [4Fe-4S] cluster serves as cofactor.

It localises to the cytoplasm. It catalyses the reaction adenosine(2503) in 23S rRNA + 2 reduced [2Fe-2S]-[ferredoxin] + 2 S-adenosyl-L-methionine = 2-methyladenosine(2503) in 23S rRNA + 5'-deoxyadenosine + L-methionine + 2 oxidized [2Fe-2S]-[ferredoxin] + S-adenosyl-L-homocysteine. The catalysed reaction is adenosine(37) in tRNA + 2 reduced [2Fe-2S]-[ferredoxin] + 2 S-adenosyl-L-methionine = 2-methyladenosine(37) in tRNA + 5'-deoxyadenosine + L-methionine + 2 oxidized [2Fe-2S]-[ferredoxin] + S-adenosyl-L-homocysteine. In terms of biological role, specifically methylates position 2 of adenine 2503 in 23S rRNA and position 2 of adenine 37 in tRNAs. m2A2503 modification seems to play a crucial role in the proofreading step occurring at the peptidyl transferase center and thus would serve to optimize ribosomal fidelity. In Roseobacter denitrificans (strain ATCC 33942 / OCh 114) (Erythrobacter sp. (strain OCh 114)), this protein is Dual-specificity RNA methyltransferase RlmN.